The primary structure comprises 209 residues: Outer-membrane lipoprotein carrier protein (209 aa).

A signal peptide spans 1-23 (MKNLLKKSLLGLAFLSLNGFAFA).

It belongs to the LolA family. As to quaternary structure, monomer.

The protein localises to the periplasm. Its function is as follows. Participates in the translocation of lipoproteins from the inner membrane to the outer membrane. Only forms a complex with a lipoprotein if the residue after the N-terminal Cys is not an aspartate (The Asp acts as a targeting signal to indicate that the lipoprotein should stay in the inner membrane). This Glaesserella parasuis serovar 5 (strain SH0165) (Haemophilus parasuis) protein is Outer-membrane lipoprotein carrier protein.